A 166-amino-acid polypeptide reads, in one-letter code: Protein-export protein SecB (166 aa).

The protein belongs to the SecB family. Homotetramer, a dimer of dimers. One homotetramer interacts with 1 SecA dimer.

It localises to the cytoplasm. In terms of biological role, one of the proteins required for the normal export of preproteins out of the cell cytoplasm. It is a molecular chaperone that binds to a subset of precursor proteins, maintaining them in a translocation-competent state. It also specifically binds to its receptor SecA. This chain is Protein-export protein SecB, found in Actinobacillus pleuropneumoniae serotype 5b (strain L20).